The chain runs to 228 residues: uncharacterized protein (228 aa).

A disordered region spans residues 90 to 115; the sequence is TDESEESSSANNTTTTASHTLSNSKK. The span at 96–113 shows a compositional bias: low complexity; that stretch reads SSSANNTTTTASHTLSNS.

Its subcellular location is the cytoplasm. The protein localises to the cell cortex. Deletion results in antifungal drug fluconazole-resistant phenotype. This is an uncharacterized protein from Saccharomyces cerevisiae (strain ATCC 204508 / S288c) (Baker's yeast).